The chain runs to 153 residues: Endoribonuclease YbeY (153 aa).

Zn(2+)-binding residues include H114, H118, and H124.

This sequence belongs to the endoribonuclease YbeY family. The cofactor is Zn(2+).

It localises to the cytoplasm. Functionally, single strand-specific metallo-endoribonuclease involved in late-stage 70S ribosome quality control and in maturation of the 3' terminus of the 16S rRNA. The chain is Endoribonuclease YbeY from Nitrosococcus oceani (strain ATCC 19707 / BCRC 17464 / JCM 30415 / NCIMB 11848 / C-107).